The sequence spans 164 residues: 3-hydroxyacyl-[acyl-carrier-protein] dehydratase FabZ (164 aa).

The active site involves His-61.

The protein belongs to the thioester dehydratase family. FabZ subfamily.

It is found in the cytoplasm. It catalyses the reaction a (3R)-hydroxyacyl-[ACP] = a (2E)-enoyl-[ACP] + H2O. In terms of biological role, involved in unsaturated fatty acids biosynthesis. Catalyzes the dehydration of short chain beta-hydroxyacyl-ACPs and long chain saturated and unsaturated beta-hydroxyacyl-ACPs. The protein is 3-hydroxyacyl-[acyl-carrier-protein] dehydratase FabZ of Ralstonia nicotianae (strain ATCC BAA-1114 / GMI1000) (Ralstonia solanacearum).